The chain runs to 449 residues: Tryptophan--tRNA ligase (449 aa).

Residues 10 to 12 (TTT) and 18 to 19 (GN) each bind ATP. The 'HIGH' region motif lies at 11–19 (TTGTPHLGN). Aspartate 143 lines the L-tryptophan pocket. ATP is bound by residues 155-157 (GRD), leucine 197, and 204-208 (KMSKS). Residues 204–208 (KMSKS) carry the 'KMSKS' region motif.

This sequence belongs to the class-I aminoacyl-tRNA synthetase family. As to quaternary structure, homodimer.

It localises to the cytoplasm. It catalyses the reaction tRNA(Trp) + L-tryptophan + ATP = L-tryptophyl-tRNA(Trp) + AMP + diphosphate + H(+). Functionally, catalyzes the attachment of tryptophan to tRNA(Trp). The sequence is that of Tryptophan--tRNA ligase from Pseudomonas syringae pv. tomato (strain ATCC BAA-871 / DC3000).